The sequence spans 179 residues: Proteasome chaperone 3 (179 aa).

It belongs to the PSMG3 family. As to quaternary structure, component of the 20S proteasome chaperone. Forms a heterodimer with POC4 that binds to proteasome precursors. Interacts with POP2.

In terms of biological role, involved in 20S proteasome assembly, facilitating the alpha-ring formation. This Saccharomyces cerevisiae (strain ATCC 204508 / S288c) (Baker's yeast) protein is Proteasome chaperone 3 (IRC25).